Reading from the N-terminus, the 243-residue chain is Probable transcriptional regulatory protein BG0025 (243 aa).

This sequence belongs to the TACO1 family.

The protein localises to the cytoplasm. The sequence is that of Probable transcriptional regulatory protein BG0025 from Borrelia garinii subsp. bavariensis (strain ATCC BAA-2496 / DSM 23469 / PBi) (Borreliella bavariensis).